The following is a 313-amino-acid chain: Probable cell division protein WhiA (313 aa).

The H-T-H motif DNA-binding region spans 278-311 (SLKELGKLLDPPLSKSGVNHRLRRIKSIANEIRG).

This sequence belongs to the WhiA family.

In terms of biological role, involved in cell division and chromosome segregation. The sequence is that of Probable cell division protein WhiA from Halothermothrix orenii (strain H 168 / OCM 544 / DSM 9562).